The sequence spans 124 residues: Small ribosomal subunit protein uS12 (124 aa).

D89 is modified (3-methylthioaspartic acid).

The protein belongs to the universal ribosomal protein uS12 family. Part of the 30S ribosomal subunit. Contacts proteins S8 and S17. May interact with IF1 in the 30S initiation complex.

Its function is as follows. With S4 and S5 plays an important role in translational accuracy. Interacts with and stabilizes bases of the 16S rRNA that are involved in tRNA selection in the A site and with the mRNA backbone. Located at the interface of the 30S and 50S subunits, it traverses the body of the 30S subunit contacting proteins on the other side and probably holding the rRNA structure together. The combined cluster of proteins S8, S12 and S17 appears to hold together the shoulder and platform of the 30S subunit. This Acinetobacter baumannii (strain AB307-0294) protein is Small ribosomal subunit protein uS12.